The sequence spans 1323 residues: Phosphoribosylformylglycinamidine synthase (1323 aa).

Residues 312–323 (GAATGSGGEIRD), 391–393 (NGY), and A691 each bind ATP. Residues D692, E733, N737, and D903 each contribute to the Mg(2+) site. Residue S905 participates in ATP binding. The region spanning 1062–1306 (VAILREQGVN…YPHSKASEWG (245 aa)) is the Glutamine amidotransferase type-1 domain. Catalysis depends on C1156, which acts as the Nucleophile. Active-site residues include H1284 and E1286.

In the N-terminal section; belongs to the FGAMS family.

It localises to the cytoplasm. The enzyme catalyses N(2)-formyl-N(1)-(5-phospho-beta-D-ribosyl)glycinamide + L-glutamine + ATP + H2O = 2-formamido-N(1)-(5-O-phospho-beta-D-ribosyl)acetamidine + L-glutamate + ADP + phosphate + H(+). Its pathway is purine metabolism; IMP biosynthesis via de novo pathway; 5-amino-1-(5-phospho-D-ribosyl)imidazole from N(2)-formyl-N(1)-(5-phospho-D-ribosyl)glycinamide: step 1/2. Functionally, phosphoribosylformylglycinamidine synthase involved in the purines biosynthetic pathway. Catalyzes the ATP-dependent conversion of formylglycinamide ribonucleotide (FGAR) and glutamine to yield formylglycinamidine ribonucleotide (FGAM) and glutamate. The sequence is that of Phosphoribosylformylglycinamidine synthase (ade3) from Schizosaccharomyces pombe (strain 972 / ATCC 24843) (Fission yeast).